Consider the following 342-residue polypeptide: tRNA N6-adenosine threonylcarbamoyltransferase (342 aa).

Residues H111 and H115 each contribute to the Fe cation site. Substrate-binding positions include 134 to 138, D167, G180, and N274; that span reads LVSGG. A Fe cation-binding site is contributed by D302.

This sequence belongs to the KAE1 / TsaD family. Fe(2+) serves as cofactor.

It is found in the cytoplasm. It catalyses the reaction L-threonylcarbamoyladenylate + adenosine(37) in tRNA = N(6)-L-threonylcarbamoyladenosine(37) in tRNA + AMP + H(+). In terms of biological role, required for the formation of a threonylcarbamoyl group on adenosine at position 37 (t(6)A37) in tRNAs that read codons beginning with adenine. Is involved in the transfer of the threonylcarbamoyl moiety of threonylcarbamoyl-AMP (TC-AMP) to the N6 group of A37, together with TsaE and TsaB. TsaD likely plays a direct catalytic role in this reaction. The chain is tRNA N6-adenosine threonylcarbamoyltransferase from Herminiimonas arsenicoxydans.